The following is a 343-amino-acid chain: Putative kinase HI_0665 (343 aa).

The Proton acceptor role is filled by aspartate 209.

Belongs to the HipA Ser/Thr kinase family.

The polypeptide is Putative kinase HI_0665 (Haemophilus influenzae (strain ATCC 51907 / DSM 11121 / KW20 / Rd)).